We begin with the raw amino-acid sequence, 194 residues long: Thioredoxin O1, mitochondrial (194 aa).

The N-terminal 42 residues, 1 to 42, are a transit peptide targeting the mitochondrion; that stretch reads MKGNWSIVRKVLHRQFSTLRSSTPSSRLSTSIRPLVLAPNSI. Phosphoserine is present on S75. A Thioredoxin domain is found at 89–194; it reads VKSEEEFINA…LKNLMEQLYK (106 aa). Catalysis depends on nucleophile residues C118 and C121. C118 and C121 are disulfide-bonded.

The protein belongs to the thioredoxin family. Plant O-type subfamily.

It is found in the mitochondrion matrix. In terms of biological role, thiol-disulfide oxidoreductase that may participate in various redox reactions. Possesses insulin disulfide bonds reducing activity. Reduced by thioredoxin reductases NTRA and NTRB. The chain is Thioredoxin O1, mitochondrial from Arabidopsis thaliana (Mouse-ear cress).